The chain runs to 102 residues: Small ribosomal subunit protein uS10 (102 aa).

Belongs to the universal ribosomal protein uS10 family. As to quaternary structure, part of the 30S ribosomal subunit.

In terms of biological role, involved in the binding of tRNA to the ribosomes. This is Small ribosomal subunit protein uS10 from Lactiplantibacillus plantarum (strain ATCC BAA-793 / NCIMB 8826 / WCFS1) (Lactobacillus plantarum).